We begin with the raw amino-acid sequence, 227 residues long: Ribosomal RNA small subunit methyltransferase G (227 aa).

S-adenosyl-L-methionine-binding positions include Gly81, Leu86, 131-132 (AE), and Arg149.

This sequence belongs to the methyltransferase superfamily. RNA methyltransferase RsmG family.

The protein resides in the cytoplasm. Functionally, specifically methylates the N7 position of guanine in position 518 of 16S rRNA. The protein is Ribosomal RNA small subunit methyltransferase G of Rhodococcus jostii (strain RHA1).